The sequence spans 231 residues: Platelet-activating factor acetylhydrolase IB subunit alpha1 (231 aa).

The residue at position 2 (serine 2) is an N-acetylserine. Serine 2 bears the Phosphoserine mark. Catalysis depends on residues serine 47, aspartate 192, and histidine 195.

It belongs to the 'GDSL' lipolytic enzyme family. Platelet-activating factor acetylhydrolase IB beta/gamma subunits subfamily. In terms of assembly, forms a catalytic dimer which is either homodimer (alpha1/alpha1 homodimer) or heterodimer with PAFAH1B2 (alpha1/alpha2 heterodimer). Component of the cytosolic (PAF-AH (I)) heterotetrameric enzyme, which is composed of PAFAH1B1 (beta), PAFAH1B2 (alpha2) and PAFAH1B3 (alpha1) subunits. The catalytic activity of the enzyme resides in the alpha1 (PAFAH1B3) and alpha2 (PAFAH1B2) subunits, whereas the beta subunit (PAFAH1B1) has regulatory activity. Trimer formation is not essential for the catalytic activity. Interacts with VLDLR; this interaction may modulate the Reelin pathway.

It localises to the cytoplasm. The catalysed reaction is a 1-O-alkyl-2-acetyl-sn-glycero-3-phosphocholine + H2O = a 1-O-alkyl-sn-glycero-3-phosphocholine + acetate + H(+). The enzyme catalyses 1-O-hexadecyl-2-acetyl-sn-glycero-3-phosphocholine + H2O = 1-O-hexadecyl-sn-glycero-3-phosphocholine + acetate + H(+). It carries out the reaction 1-O-hexadecyl-2-acetyl-sn-glycero-3-phosphate + H2O = 1-O-hexadecyl-sn-glycero-3-phosphate + acetate + H(+). With respect to regulation, beta subunit (PAFAH1B1) inhibits the acetylhydrolase activity of the alpha1/alpha1 catalytic homodimer. Functionally, alpha1 catalytic subunit of the cytosolic type I platelet-activating factor (PAF) acetylhydrolase (PAF-AH (I)) heterotetrameric enzyme that catalyzes the hydrolyze of the acetyl group at the sn-2 position of PAF and its analogs and modulates the action of PAF. The activity and substrate specificity of PAF-AH (I) are affected by its subunit composition. Both alpha1/alpha1 homodimer (PAFAH1B3/PAFAH1B3 homodimer) and alpha1/alpha2 heterodimer(PAFAH1B3/PAFAH1B2 heterodimer) hydrolyze 1-O-alkyl-2-acetyl-sn-glycero-3-phosphoric acid (AAGPA) more efficiently than PAF, but they have little hydrolytic activity towards 1-O-alkyl-2-acetyl-sn-glycero-3-phosphorylethanolamine (AAGPE). Plays an important role during the development of brain. This Pongo abelii (Sumatran orangutan) protein is Platelet-activating factor acetylhydrolase IB subunit alpha1.